A 202-amino-acid polypeptide reads, in one-letter code: Snake venom metalloproteinase fibrolase (202 aa).

One can recognise a Peptidase M12B domain in the interval 6–202 (RYIELVIVAD…HNPQCILNQP (197 aa)). Position 9 (E9) interacts with Ca(2+). N-linked (GlcNAc...) asparagine glycosylation occurs at N25. D93 provides a ligand contact to Ca(2+). 3 disulfide bridges follow: C117/C197, C157/C181, and C159/C164. H142 is a binding site for Zn(2+). The active site involves E143. Zn(2+) contacts are provided by H146 and H152. Positions 197 and 200 each coordinate Ca(2+).

Belongs to the venom metalloproteinase (M12B) family. P-I subfamily. In terms of assembly, monomer. The cofactor is Zn(2+). Post-translationally, glycosylated. In terms of tissue distribution, expressed by the venom gland.

The protein resides in the secreted. It carries out the reaction Hydrolysis of 14-Ala-|-Leu-15 in insulin B chain and 413-Lys-|-Leu-414 in alpha-chain of fibrinogen.. Activated by calcium and magnesium ions. Inhibited by EDTA, DTT and L-cysteine. Activity is not affected by PMSF or heparin. Has fibrino(geno)lytic activity on the alpha and beta chains of fibrinogen (FGA and FGB). Inhibits human ADP- and collagen-induced platelet aggregation on platelet-rich plasma but does not affect the thrombin-induced aggregation of rabbit washed platelets. Slightly degrades plasminogen. In Macrovipera lebetinus (Levantine viper), this protein is Snake venom metalloproteinase fibrolase.